The primary structure comprises 274 residues: Large ribosomal subunit protein uL2 (274 aa).

Positions 225–274 (MNPVDHPHGGGEGRSPIGRHPVTPWGKPTLGVKTRKKNKASSKLIIKRRK) are disordered. Over residues 257-274 (KTRKKNKASSKLIIKRRK) the composition is skewed to basic residues.

It belongs to the universal ribosomal protein uL2 family. As to quaternary structure, part of the 50S ribosomal subunit. Forms a bridge to the 30S subunit in the 70S ribosome.

Its function is as follows. One of the primary rRNA binding proteins. Required for association of the 30S and 50S subunits to form the 70S ribosome, for tRNA binding and peptide bond formation. It has been suggested to have peptidyltransferase activity; this is somewhat controversial. Makes several contacts with the 16S rRNA in the 70S ribosome. The sequence is that of Large ribosomal subunit protein uL2 from Carboxydothermus hydrogenoformans (strain ATCC BAA-161 / DSM 6008 / Z-2901).